We begin with the raw amino-acid sequence, 159 residues long: Ribosomal RNA large subunit methyltransferase H (159 aa).

S-adenosyl-L-methionine is bound by residues leucine 76, glycine 108, and 127–132 (FGRLTL).

Belongs to the RNA methyltransferase RlmH family. In terms of assembly, homodimer.

The protein localises to the cytoplasm. It carries out the reaction pseudouridine(1915) in 23S rRNA + S-adenosyl-L-methionine = N(3)-methylpseudouridine(1915) in 23S rRNA + S-adenosyl-L-homocysteine + H(+). Its function is as follows. Specifically methylates the pseudouridine at position 1915 (m3Psi1915) in 23S rRNA. This Listeria monocytogenes serotype 4b (strain CLIP80459) protein is Ribosomal RNA large subunit methyltransferase H.